The following is a 564-amino-acid chain: Arginine--tRNA ligase (564 aa).

The 'HIGH' region motif lies at 130 to 140 (ANPTGSLHIGH).

It belongs to the class-I aminoacyl-tRNA synthetase family. As to quaternary structure, monomer.

The protein localises to the cytoplasm. It catalyses the reaction tRNA(Arg) + L-arginine + ATP = L-arginyl-tRNA(Arg) + AMP + diphosphate. In Malacoplasma penetrans (strain HF-2) (Mycoplasma penetrans), this protein is Arginine--tRNA ligase.